Reading from the N-terminus, the 135-residue chain is Ribonuclease P protein component (135 aa).

Residues 115 to 135 are disordered; the sequence is TNETVSPVSDTPLPQHERGSQ.

Belongs to the RnpA family. Consists of a catalytic RNA component (M1 or rnpB) and a protein subunit.

The enzyme catalyses Endonucleolytic cleavage of RNA, removing 5'-extranucleotides from tRNA precursor.. Functionally, RNaseP catalyzes the removal of the 5'-leader sequence from pre-tRNA to produce the mature 5'-terminus. It can also cleave other RNA substrates such as 4.5S RNA. The protein component plays an auxiliary but essential role in vivo by binding to the 5'-leader sequence and broadening the substrate specificity of the ribozyme. The polypeptide is Ribonuclease P protein component (Chloroflexus aurantiacus (strain ATCC 29366 / DSM 635 / J-10-fl)).